The following is a 671-amino-acid chain: Anaphase-promoting complex subunit cut9 (671 aa).

Residues 1–24 (MVVKRTQTDSRMQSTPGNHNHPDA) are disordered. TPR repeat units lie at residues 83 to 114 (REDYLRLWRHDALMQQQYKCAAFVGEKVLDIT), 117 to 142 (PNDAFWLAQVYCCTGDYARAKCLLTK), 150 to 173 (SACRYLAAFCLVKLYDWQGALNLL), 198 to 229 (LEASMCYLRGQVYTNLSNFDRAKECYKEALMV), 234 to 257 (YEAFDQLVSNHLLTADEEWDLVLK), 268 to 296 (AAFLRSLYMLKLNKTSHEDELRRAEDYLS), 306 to 334 (DLLLCKADTLFVRSRFIDVLAITTKILEI), 341 to 368 (VYPLHLASLHESGEKNKLYLISNDLVDR), 373 to 402 (AVTWLAVGIYYLCVNKISEARRYFSKSSTM), 407 to 435 (GPAWIGFAHSFAIEGEHDQAISAYTTAAR), 442 to 470 (LPYLFLGMQHMQLGNILLANEYLQSSYAL), 475 to 507 (PLLLNELGVVAFNKSDMQTAINHFQNALLLVKK), 513 to 545 (KPWAATWANLGHAYRKLKMYDAAIDALNQGLLL), and 550 to 579 (ANVHTAIALVYLHKKIPGLAITHLHESLAI). The interval 622-643 (NLNTSDKSMSMEDQSGKVTESV) is disordered.

As to quaternary structure, the APC/C is composed of at least 13 subunits: apc1, apc2, nuc2, apc4, apc5, cut9, apc8, apc10, apc11, hcn1, apc13, apc14 and apc15. Homodimer. Interacts directly with nuc2 and hcn1. Post-translationally, phosphorylated.

It is found in the nucleus. Its function is as follows. Component of the anaphase-promoting complex/cyclosome (APC/C), a cell cycle-regulated E3 ubiquitin-protein ligase complex that controls progression through mitosis and the G1 phase of the cell cycle. The APC/C is thought to confer substrate specificity and, in the presence of ubiquitin-conjugating E2 enzymes, it catalyzes the formation of protein-ubiquitin conjugates that are subsequently degraded by the 26S proteasome. May play a pivotal role in the control of anaphase. The sequence is that of Anaphase-promoting complex subunit cut9 (cut9) from Schizosaccharomyces pombe (strain 972 / ATCC 24843) (Fission yeast).